A 492-amino-acid chain; its full sequence is NADPH:adrenodoxin oxidoreductase, mitochondrial (492 aa).

The transit peptide at 1–32 (MAPRCWRWWPWSSWTRTRLPPSRSIQNFGQHF) directs the protein to the mitochondrion. FAD contacts are provided by Ala49, Glu70, Leu78, and Val114. NADP(+) is bound by residues 185 to 188 (QGNV), 229 to 230 (RR), and Glu241. Residues Ser311 and Ser318 each carry the phosphoserine modification. Residues Trp399 and 406-408 (GVI) each bind FAD. Position 406 (Gly406) interacts with NADP(+).

Belongs to the ferredoxin--NADP reductase type 1 family. Monomer. Interacts directly with FDX1. FAD serves as cofactor. As to expression, detected in adrenal cortex and corpus luteum (at protein level).

The protein localises to the mitochondrion inner membrane. It catalyses the reaction 2 reduced [adrenodoxin] + NADP(+) + H(+) = 2 oxidized [adrenodoxin] + NADPH. The catalysed reaction is 2 reduced [2Fe-2S]-[ferredoxin] + NADP(+) + H(+) = 2 oxidized [2Fe-2S]-[ferredoxin] + NADPH. Its pathway is steroid metabolism; cholesterol metabolism. In terms of biological role, serves as the first electron transfer protein in all the mitochondrial P450 systems including cholesterol side chain cleavage in all steroidogenic tissues, steroid 11-beta hydroxylation in the adrenal cortex, 25-OH-vitamin D3-24 hydroxylation in the kidney, and sterol C-27 hydroxylation in the liver. Also acts as a ferredoxin--NADP(+) reductase essential for coenzyme Q biosynthesis: together with FDX2, transfers the electrons required for the hydroxylation reaction performed by COQ6. This is NADPH:adrenodoxin oxidoreductase, mitochondrial (FDXR) from Bos taurus (Bovine).